Here is a 749-residue protein sequence, read N- to C-terminus: Semaphorin-3B (749 aa).

Residues 1–24 form the signal peptide; it reads MGRAGAAAVIPGLALLWAVGLGSA. One can recognise a Sema domain in the interval 30-513; that stretch reads RLRLSFQELQ…SRSAVAQIAL (484 aa). Asparagine 82 carries N-linked (GlcNAc...) asparagine glycosylation. Residues cysteine 102 and cysteine 113 are joined by a disulfide bond. N-linked (GlcNAc...) asparagine glycosylation is present at asparagine 124. Cystine bridges form between cysteine 131–cysteine 140, cysteine 269–cysteine 380, and cysteine 293–cysteine 340. A glycan (N-linked (GlcNAc...) asparagine) is linked at asparagine 427. Intrachain disulfides connect cysteine 516–cysteine 534 and cysteine 644–cysteine 710. One can recognise an Ig-like C2-type domain in the interval 573-659; it reads PALLEHKVFG…GFTQPLRRLS (87 aa). Positions 702-749 are disordered; it reads GSANSLRMCRPQPALQSLPLESRRKGRNRRTHAPEPRAERGPRSATHW. Basic and acidic residues predominate over residues 733 to 743; it reads HAPEPRAERGP.

This sequence belongs to the semaphorin family. Expressed abundantly but differentially in a variety of neural and nonneural tissues.

It localises to the secreted. Its subcellular location is the endoplasmic reticulum. Functionally, inhibits axonal extension by providing local signals to specify territories inaccessible for growing axons. The chain is Semaphorin-3B (SEMA3B) from Homo sapiens (Human).